The following is a 40-amino-acid chain: Biotin carboxylase (40 aa).

A Biotin carboxylation domain is found at 1–40 (ILVANRGEIAVRLLEEAPSPALTPELRITAYLPSGGPFVR). The 15-residue stretch at 13-27 (LLEEAPSPALTPELR) folds into the ATP-grasp domain.

Acetyl-CoA carboxylase is a heterohexamer of biotin carboxyl carrier protein, biotin carboxylase and the two subunits of carboxyl transferase in a 2:2 complex. The cofactor is Mg(2+). Mn(2+) serves as cofactor.

The catalysed reaction is N(6)-biotinyl-L-lysyl-[protein] + hydrogencarbonate + ATP = N(6)-carboxybiotinyl-L-lysyl-[protein] + ADP + phosphate + H(+). Its pathway is lipid metabolism; malonyl-CoA biosynthesis; malonyl-CoA from acetyl-CoA: step 1/1. This protein is a component of the acetyl coenzyme A carboxylase complex; first, biotin carboxylase catalyzes the carboxylation of the carrier protein and then the transcarboxylase transfers the carboxyl group to form malonyl-CoA. The protein is Biotin carboxylase of Populus euphratica (Euphrates poplar).